A 397-amino-acid chain; its full sequence is Lysophospholipid transporter LplT (397 aa).

The next 11 helical transmembrane spans lie at 21–41 (SAQFLSAFGDNALLFATLALL), 53–73 (ILQMVFVGAYILFAPFVGQVA), 91–111 (LGAASICFGFNPFIGYTLVGI), 139–159 (LMESSTIAAILLGSVAGGVLA), 164–184 (LAALGICAVVYAGAVVANLFI), 229–249 (WGAGVTLRFLLVLWVPTALGI), 257–277 (YLNAMVAVGIVVGAGAAAKLV), 281–301 (TVRRCMPAGILIGVGVLFFSL), 304–324 (ALLPAYGLLILIGILGGFFIV), 344–364 (IAVQNLGENTAMLLMLGLYSL), and 372–392 (VVGIGVGFGALFALAITGLWI).

This sequence belongs to the major facilitator superfamily. LplT (TC 2.A.1.42) family.

The protein resides in the cell inner membrane. Its function is as follows. Catalyzes the facilitated diffusion of 2-acyl-glycero-3-phosphoethanolamine (2-acyl-GPE) into the cell. The chain is Lysophospholipid transporter LplT from Enterobacter sp. (strain 638).